A 1400-amino-acid polypeptide reads, in one-letter code: S phase cyclin A-associated protein in the endoplasmic reticulum (1400 aa).

4 disordered regions span residues 36 to 61 (ESKD…GTHK), 226 to 277 (VKAH…IRSR), 517 to 550 (PARP…HEEK), and 701 to 723 (RIEQ…RARD). Residues 231–243 (TGSTASSEITPAQ) show a composition bias toward polar residues. Residues 539 to 550 (TIAESKKKHEEK) show a composition bias toward basic and acidic residues. The segment at 792-816 (KQCSLCNVLISSEVYLFSHVKGRKH) adopts a C2H2-type zinc-finger fold. Ser-832 carries the post-translational modification Phosphoserine.

As to quaternary structure, interacts with CCNA2/CDK2 complex, but not with CCNA2/CDC2, CCNB1/CDC2 or CCNE1/CDK2 complexes, at multiple phases of the cell cycle, including S and G2/M. Phosphorylated in vitro by the CCNA2/CDK2 complex. Widely expressed with high expression in testis. Isoform 1 is detected in various tissues, including retina, fetal and adult brain. Isoform 2 is expressed in the retina at high levels, and in the brain at very low levels.

The protein localises to the endoplasmic reticulum. Its subcellular location is the nucleus. Functionally, CCNA2/CDK2 regulatory protein that transiently maintains CCNA2 in the cytoplasm. The sequence is that of S phase cyclin A-associated protein in the endoplasmic reticulum from Homo sapiens (Human).